Here is a 118-residue protein sequence, read N- to C-terminus: Putative ankyrin repeat protein R747 (118 aa).

The stretch at 70–99 is one ANK repeat; the sequence is NCYYLLDYAIMKNDIPVIVTLIEKGANINR.

This is Putative ankyrin repeat protein R747 from Acanthamoeba polyphaga (Amoeba).